The sequence spans 494 residues: Hexokinase-2 (494 aa).

The region spanning 32-483 (GRADAVLREL…SGIGAALLAA (452 aa)) is the Hexokinase domain. The tract at residues 87–225 (SGEEKGVFYA…GLDMKVTALI (139 aa)) is hexokinase small subdomain. ADP is bound by residues Gly-101, Thr-102, and Asn-103. D-glucose is bound by residues Thr-191, Lys-192, Asn-226, and Asp-227. The interval 226–472 (NDTIGTLAGG…STIVIKLAKD (247 aa)) is hexokinase large subdomain. An ADP-binding site is contributed by Thr-250. Asn-253, Glu-281, and Glu-312 together coordinate D-glucose. Residue Gly-437 participates in ADP binding.

It belongs to the hexokinase family. As to expression, expressed in roots, leaves, flowers, immature seeds, endosperm and seed coat.

The catalysed reaction is a D-hexose + ATP = a D-hexose 6-phosphate + ADP + H(+). It carries out the reaction D-fructose + ATP = D-fructose 6-phosphate + ADP + H(+). The enzyme catalyses D-glucose + ATP = D-glucose 6-phosphate + ADP + H(+). The protein operates within carbohydrate metabolism; hexose metabolism. It functions in the pathway carbohydrate degradation; glycolysis; D-glyceraldehyde 3-phosphate and glycerone phosphate from D-glucose: step 1/4. Fructose and glucose phosphorylating enzyme. This is Hexokinase-2 (HXK2) from Oryza sativa subsp. japonica (Rice).